We begin with the raw amino-acid sequence, 115 residues long: Macrophage migration inhibitory factor (115 aa).

The active-site Proton acceptor; via imino nitrogen is the proline 2. Residues lysine 33 and isoleucine 65 each coordinate substrate. Lysine 78 bears the N6-acetyllysine; alternate mark. The residue at position 78 (lysine 78) is an N6-succinyllysine; alternate. Residue asparagine 98 coordinates substrate.

The protein belongs to the MIF family. Homotrimer. Interacts with CXCR2 extracellular domain. Interacts with the CD74 extracellular domain, USO1, COPS5 and BNIPL. Expressed in a wide variety of organs including brain, spleen, liver, muscle and kidney.

The protein localises to the secreted. The protein resides in the cytoplasm. The catalysed reaction is 3-phenylpyruvate = enol-phenylpyruvate. The enzyme catalyses L-dopachrome = 5,6-dihydroxyindole-2-carboxylate. Its function is as follows. Pro-inflammatory cytokine involved in the innate immune response to bacterial pathogens. The expression of MIF at sites of inflammation suggests a role as mediator in regulating the function of macrophages in host defense. Counteracts the anti-inflammatory activity of glucocorticoids. Has phenylpyruvate tautomerase and dopachrome tautomerase activity (in vitro), but the physiological substrate is not known. It is not clear whether the tautomerase activity has any physiological relevance, and whether it is important for cytokine activity. In Rattus norvegicus (Rat), this protein is Macrophage migration inhibitory factor (Mif).